Consider the following 185-residue polypeptide: Prorelaxin H1 (185 aa).

The N-terminal stretch at 1–22 (MPRLFLFHLLEFCLLLNQFSRA) is a signal peptide. 3 disulfides stabilise this stretch: cysteine 35-cysteine 172, cysteine 47-cysteine 185, and cysteine 171-cysteine 176. Positions 56-158 (SLSQEDAPQT…KYLGLDTHSQ (103 aa)) are cleaved as a propeptide — connecting peptide.

This sequence belongs to the insulin family. In terms of assembly, heterodimer of a B chain and an A chain linked by two disulfide bonds. Prostate. Not expressed in placenta, decidua or ovary.

It localises to the secreted. Relaxin is an ovarian hormone that acts with estrogen to produce dilatation of the birth canal in many mammals. May be involved in remodeling of connective tissues during pregnancy, promoting growth of pubic ligaments and ripening of the cervix. The sequence is that of Prorelaxin H1 (RLN1) from Homo sapiens (Human).